Here is a 254-residue protein sequence, read N- to C-terminus: 3-deoxy-manno-octulosonate cytidylyltransferase (254 aa).

It belongs to the KdsB family.

The protein localises to the cytoplasm. The enzyme catalyses 3-deoxy-alpha-D-manno-oct-2-ulosonate + CTP = CMP-3-deoxy-beta-D-manno-octulosonate + diphosphate. The protein operates within nucleotide-sugar biosynthesis; CMP-3-deoxy-D-manno-octulosonate biosynthesis; CMP-3-deoxy-D-manno-octulosonate from 3-deoxy-D-manno-octulosonate and CTP: step 1/1. It participates in bacterial outer membrane biogenesis; lipopolysaccharide biosynthesis. Functionally, activates KDO (a required 8-carbon sugar) for incorporation into bacterial lipopolysaccharide in Gram-negative bacteria. This is 3-deoxy-manno-octulosonate cytidylyltransferase from Pseudomonas putida (strain W619).